Consider the following 139-residue polypeptide: Large ribosomal subunit protein uL16 (139 aa).

Residues 1–16 (MLIPKRTKYRKQHRPV) are compositionally biased toward basic residues. Residues 1-22 (MLIPKRTKYRKQHRPVRSGMSK) form a disordered region.

The protein belongs to the universal ribosomal protein uL16 family. In terms of assembly, part of the 50S ribosomal subunit.

Functionally, binds 23S rRNA and is also seen to make contacts with the A and possibly P site tRNAs. The sequence is that of Large ribosomal subunit protein uL16 from Bifidobacterium longum (strain DJO10A).